A 96-amino-acid chain; its full sequence is ATP synthase subunit c (96 aa).

2 helical membrane-spanning segments follow: residues 28-50 (LGAGVAMGIGAIGPGVGEGNIGA) and 75-95 (AVTESTGLYSLVVALILLFVL).

This sequence belongs to the ATPase C chain family. As to quaternary structure, F-type ATPases have 2 components, F(1) - the catalytic core - and F(0) - the membrane proton channel. F(1) has five subunits: alpha(3), beta(3), gamma(1), delta(1), epsilon(1). F(0) has three main subunits: a(1), b(2) and c(10-14). The alpha and beta chains form an alternating ring which encloses part of the gamma chain. F(1) is attached to F(0) by a central stalk formed by the gamma and epsilon chains, while a peripheral stalk is formed by the delta and b chains.

Its subcellular location is the cell inner membrane. Functionally, f(1)F(0) ATP synthase produces ATP from ADP in the presence of a proton or sodium gradient. F-type ATPases consist of two structural domains, F(1) containing the extramembraneous catalytic core and F(0) containing the membrane proton channel, linked together by a central stalk and a peripheral stalk. During catalysis, ATP synthesis in the catalytic domain of F(1) is coupled via a rotary mechanism of the central stalk subunits to proton translocation. Its function is as follows. Key component of the F(0) channel; it plays a direct role in translocation across the membrane. A homomeric c-ring of between 10-14 subunits forms the central stalk rotor element with the F(1) delta and epsilon subunits. This Petrotoga mobilis (strain DSM 10674 / SJ95) protein is ATP synthase subunit c.